A 253-amino-acid polypeptide reads, in one-letter code: Acetylglutamate kinase (253 aa).

Substrate contacts are provided by residues 37–38 (GG), arginine 59, and asparagine 149.

It belongs to the acetylglutamate kinase family. ArgB subfamily.

It is found in the cytoplasm. It carries out the reaction N-acetyl-L-glutamate + ATP = N-acetyl-L-glutamyl 5-phosphate + ADP. The protein operates within amino-acid biosynthesis; L-arginine biosynthesis; N(2)-acetyl-L-ornithine from L-glutamate: step 2/4. Catalyzes the ATP-dependent phosphorylation of N-acetyl-L-glutamate. The sequence is that of Acetylglutamate kinase from Rubrobacter xylanophilus (strain DSM 9941 / JCM 11954 / NBRC 16129 / PRD-1).